We begin with the raw amino-acid sequence, 1277 residues long: Myosin-1 (1277 aa).

The segment covering 1–13 (MAPSKKAGKKVTP) has biased composition (basic residues). Residues 1 to 27 (MAPSKKAGKKVTPKKAAGNNAKSKVAK) form a disordered region. The Myosin motor domain maps to 39-718 (VGVTDMTLLT…TLFALETMRD (680 aa)). Position 132-139 (132-139 (GESGAGKT)) interacts with ATP. Serine 360 carries the post-translational modification Phosphoserine. Residues 407–489 (IIGILDIFGF…PGIFAALNDA (83 aa)) form an actin-binding region. Residues 567-587 (LFPDRPDPNSKKRPPTASDRI) form a disordered region. IQ domains follow at residues 722 to 742 (HNMA…KHEC) and 743 to 768 (ARRI…YGHQ). A TH1 domain is found at 776 to 965 (RRRFSLLSYR…TVHVPSGEPA (190 aa)). 2 disordered regions span residues 952 to 1072 (YKSH…AEPE) and 1129 to 1259 (PKAA…GPGQ). Positions 1015 to 1056 (PAVATPSVVSTPAAAAVVSKPKPAASTPAAVRAPAVTPAARS) are enriched in low complexity. The segment covering 1057–1068 (VPPPPPPPPPAR) has biased composition (pro residues). In terms of domain architecture, SH3 spans 1071-1129 (PEKEMYRAKFDFQGQEGEMSLTKDDEVELIEKDENGWWLVKKDGVEAWAPYNYLERIAP). A compositionally biased stretch (pro residues) spans 1132–1142 (APAPPPPPARP). Composition is skewed to polar residues over residues 1145–1159 (TSTV…TTAD) and 1185–1197 (AATT…SSRP). Residues 1204 to 1224 (VPPPVAAKPKPPVVAPKPGVP) show a composition bias toward pro residues. A compositionally biased stretch (low complexity) spans 1226–1240 (PGGKPALPTTARPAP). A compositionally biased stretch (gly residues) spans 1241 to 1258 (SGGGAAAGRLGGGGGGPG).

This sequence belongs to the TRAFAC class myosin-kinesin ATPase superfamily. Myosin family. In terms of processing, phosphorylation of the TEDS site (Ser-360) is required for the polarization of the actin cytoskeleton. Phosphorylation probably activates the myosin-I ATPase activity.

The protein resides in the cytoplasm. It is found in the cytoskeleton. The protein localises to the actin patch. In terms of biological role, type-I myosin implicated in the organization of the actin cytoskeleton. Required for proper actin cytoskeleton polarization. At the cell cortex, assembles in patch-like structures together with proteins from the actin-polymerizing machinery and promotes actin assembly. Functions as actin nucleation-promoting factor (NPF) for the Arp2/3 complex. In Coprinopsis cinerea (strain Okayama-7 / 130 / ATCC MYA-4618 / FGSC 9003) (Inky cap fungus), this protein is Myosin-1 (MYO1).